The primary structure comprises 85 residues: Alpha-insect toxin Bot14 (85 aa).

A signal peptide spans 1–18 (MSSLMISTAMKGKAPYRQ). Residues 20-84 (RDGYIAQPHN…GIIVHGEKCH (65 aa)) form the LCN-type CS-alpha/beta domain. 4 disulfide bridges follow: Cys30/Cys83, Cys34/Cys55, Cys41/Cys65, and Cys45/Cys67.

This sequence belongs to the long (4 C-C) scorpion toxin superfamily. Sodium channel inhibitor family. Alpha subfamily. In terms of tissue distribution, expressed by the venom gland.

The protein resides in the secreted. Alpha toxins bind voltage-independently at site-3 of sodium channels (Nav) and inhibit the inactivation of the activated channels, thereby blocking neuronal transmission. This toxin is active only on insects. The chain is Alpha-insect toxin Bot14 from Buthus occitanus tunetanus (Common European scorpion).